Reading from the N-terminus, the 48-residue chain is Cytochrome b559 subunit beta (48 aa).

The chain crosses the membrane as a helical span at residues 23–39 (WLAVHALAIPSVFFLGS). Heme is bound at residue His27.

This sequence belongs to the PsbE/PsbF family. In terms of assembly, heterodimer of an alpha subunit and a beta subunit. PSII is composed of 1 copy each of membrane proteins PsbA, PsbB, PsbC, PsbD, PsbE, PsbF, PsbH, PsbI, PsbJ, PsbK, PsbL, PsbM, PsbT, PsbX, PsbY, Psb30/Ycf12, peripheral proteins PsbO, CyanoQ (PsbQ), PsbU, PsbV and a large number of cofactors. It forms dimeric complexes. Heme b serves as cofactor.

The protein resides in the cellular thylakoid membrane. Its function is as follows. This b-type cytochrome is tightly associated with the reaction center of photosystem II (PSII). PSII is a light-driven water:plastoquinone oxidoreductase that uses light energy to abstract electrons from H(2)O, generating O(2) and a proton gradient subsequently used for ATP formation. It consists of a core antenna complex that captures photons, and an electron transfer chain that converts photonic excitation into a charge separation. The chain is Cytochrome b559 subunit beta from Prochlorococcus marinus (strain MIT 9301).